The primary structure comprises 77 residues: MNLKPQTLMVAIQCVAARTRELDAQLQNDDPQNAAELEQLLVGYDLAADDLKNAYEQALGQYSGLPPYDRLIEEPAS.

In terms of assembly, forms a heterotetramer with Tse2 consisting of two Tse2 dimers and two Tsi2 dimers. Formation of the complex inactivates Tse2 enzymatic activity.

Functionally, immunity protein that plays a role in preventing early activation of toxin Tse2. Binds to a large surface of Tse2 and thereby occludes the active site to specifically inhibits Tse2. This is Immune protein Tsi2 from Pseudomonas aeruginosa (strain ATCC 15692 / DSM 22644 / CIP 104116 / JCM 14847 / LMG 12228 / 1C / PRS 101 / PAO1).